The primary structure comprises 450 residues: MKHLASSIALTLLLPAVQAQQTVWGQCGGQGWSGPTNCVAGAACSTLNPYYAQCIPGATATSTTLSTTTTTQTTTKPTTTGPTTSAPTVTASGNPFSGYQLYANPYYSSEVHTLAMPSLPSSLQPKASAVAEVPSFVWLDVAAKVPTMGTYLADIQAKNKAGASPPIAGIFVVYDLPDRDCAALASNGEYSIANNGVANYKAYIDAIRAQLVKYSDVHTILVIEPDSLANLVTNLNVAKCANAQSAYLECVDYALKQLNLPNVAMYLDAGHAGWLGWPANLGPAATLFAKVYTDAGSPAALRGLATNVANYNAWSLSTCPSYTQGDPNCDEKKYINAMAPLLKNAGFDAHFIMDTSRNGVQPTKQSAWGDWCNVIGTGFGVRPSTNTGDPLQDAFVWIKPGGESDGTSNSSSARYDAHCGYSDALQPAPEAGTWFQAYFEQLLTNANPSF.

Residues 1 to 19 (MKHLASSIALTLLLPAVQA) form the signal peptide. The CBM1 domain maps to 20–55 (QQTVWGQCGGQGWSGPTNCVAGAACSTLNPYYAQCI). 2 disulfides stabilise this stretch: C27-C44 and C38-C54. Residues 59-90 (TATSTTLSTTTTTQTTTKPTTTGPTTSAPTVT) form a thr-rich linker region. A disordered region spans residues 63–89 (TTLSTTTTTQTTTKPTTTGPTTSAPTV). Positions 91 to 450 (ASGNPFSGYQ…QLLTNANPSF (360 aa)) are catalytic. The active site involves D180. 2 disulfide bridges follow: C181/C240 and C372/C419. D226 serves as the catalytic Proton donor. The Nucleophile role is filled by D405. N409 carries an N-linked (GlcNAc...) asparagine glycan.

It belongs to the glycosyl hydrolase 6 (cellulase B) family.

The protein resides in the secreted. The catalysed reaction is Hydrolysis of (1-&gt;4)-beta-D-glucosidic linkages in cellulose and cellotetraose, releasing cellobiose from the non-reducing ends of the chains.. Its function is as follows. The biological conversion of cellulose to glucose generally requires three types of hydrolytic enzymes: (1) Endoglucanases which cut internal beta-1,4-glucosidic bonds; (2) Exocellobiohydrolases that cut the disaccharide cellobiose from the non-reducing end of the cellulose polymer chain; (3) Beta-1,4-glucosidases which hydrolyze the cellobiose and other short cello-oligosaccharides to glucose. The chain is Probable 1,4-beta-D-glucan cellobiohydrolase C (cbhC) from Neosartorya fischeri (strain ATCC 1020 / DSM 3700 / CBS 544.65 / FGSC A1164 / JCM 1740 / NRRL 181 / WB 181) (Aspergillus fischerianus).